The following is a 370-amino-acid chain: Cytochrome b (370 aa).

4 helical membrane-spanning segments follow: residues 25–45 (FGSM…FLAV), 69–90 (WLMQ…YIHI), 105–125 (WLSG…GYVL), and 170–190 (FFAL…LHIM). His75 and His89 together coordinate heme b. Heme b-binding residues include His174 and His188. A ubiquinone is bound at residue His193. 4 consecutive transmembrane segments (helical) span residues 218 to 238 (YKDL…VSFF), 280 to 300 (LGGA…PFTH), 312 to 332 (FMQL…WTAT), and 339 to 358 (FTTI…ISNP).

The protein belongs to the cytochrome b family. In terms of assembly, the cytochrome bc1 complex contains 3 respiratory subunits (MT-CYB, CYC1 and UQCRFS1), 2 core proteins (UQCRC1 and UQCRC2) and probably 6 low-molecular weight proteins. The cofactor is heme b.

Its subcellular location is the mitochondrion inner membrane. Component of the ubiquinol-cytochrome c reductase complex (complex III or cytochrome b-c1 complex) that is part of the mitochondrial respiratory chain. The b-c1 complex mediates electron transfer from ubiquinol to cytochrome c. Contributes to the generation of a proton gradient across the mitochondrial membrane that is then used for ATP synthesis. In Chilabothrus fordii (Ford's boa), this protein is Cytochrome b (MT-CYB).